Here is a 150-residue protein sequence, read N- to C-terminus: Large ribosomal subunit protein bL9 (150 aa).

The protein belongs to the bacterial ribosomal protein bL9 family.

In terms of biological role, binds to the 23S rRNA. In Corynebacterium aurimucosum (strain ATCC 700975 / DSM 44827 / CIP 107346 / CN-1) (Corynebacterium nigricans), this protein is Large ribosomal subunit protein bL9.